Consider the following 400-residue polypeptide: Argininosuccinate synthase (400 aa).

An ATP-binding site is contributed by 8 to 16 (AYSGGLDTS). L-citrulline contacts are provided by Y87 and S92. G117 serves as a coordination point for ATP. Positions 119, 123, and 124 each coordinate L-aspartate. Residue N123 participates in L-citrulline binding. L-citrulline is bound by residues R127, S175, E259, and Y271.

This sequence belongs to the argininosuccinate synthase family. Type 1 subfamily. Homotetramer.

Its subcellular location is the cytoplasm. It carries out the reaction L-citrulline + L-aspartate + ATP = 2-(N(omega)-L-arginino)succinate + AMP + diphosphate + H(+). It functions in the pathway amino-acid biosynthesis; L-arginine biosynthesis; L-arginine from L-ornithine and carbamoyl phosphate: step 2/3. This is Argininosuccinate synthase from Frankia alni (strain DSM 45986 / CECT 9034 / ACN14a).